The primary structure comprises 180 residues: Insulin-like growth factor 2 (180 aa).

The N-terminal stretch at 1-24 is a signal peptide; the sequence is MGIPVGKSMLVLLISLAFALCCIA. Residues 25-52 are b; that stretch reads AYRPSETLCGGELVDTLQFVCSDRGFYF. Disulfide bonds link C33–C71, C45–C84, and C70–C75. The segment at 53-64 is c; that stretch reads SRPSSRANRRSR. Positions 65 to 85 are a; sequence GIVEECCFRSCDLALLETYCA. The d stretch occupies residues 86-91; that stretch reads TPAKSE. A propeptide spans 92–180 (e peptide); that stretch reads RDVSTSQAVL…ASSEMSSNHQ (89 aa). The tract at residues 160–180 is disordered; that stretch reads VLPPKDPAHGGASSEMSSNHQ.

The protein belongs to the insulin family. In terms of assembly, interacts with MYORG; this interaction is required for IGF2 secretion. Interacts with integrins ITGAV:ITGB3 and ITGA6:ITGB4; integrin-binding is required for IGF2 signaling. Interacts with IGFBP2. Proteolytically processed by PCSK4, proIGF2 is cleaved at Arg-128 and Arg-92 to generate big-IGF2 and mature IGF2.

Its subcellular location is the secreted. In terms of biological role, the insulin-like growth factors possess growth-promoting activity. Major fetal growth hormone in mammals. Plays a key role in regulating fetoplacental development. IGF2 is influenced by placental lactogen. Also involved in tissue differentiation. In adults, involved in glucose metabolism in adipose tissue, skeletal muscle and liver. Acts as a ligand for integrin which is required for IGF2 signaling. Positively regulates myogenic transcription factor MYOD1 function by facilitating the recruitment of transcriptional coactivators, thereby controlling muscle terminal differentiation. Inhibits myoblast differentiation and modulates metabolism via increasing the mitochondrial respiration rate. Its function is as follows. Preptin undergoes glucose-mediated co-secretion with insulin, and acts as a physiological amplifier of glucose-mediated insulin secretion. Exhibits osteogenic properties by increasing osteoblast mitogenic activity through phosphoactivation of MAPK1 and MAPK3. This chain is Insulin-like growth factor 2, found in Rattus norvegicus (Rat).